Reading from the N-terminus, the 171-residue chain is Synaptonemal complex central element protein 2 (171 aa).

The segment at 1–52 is disordered; the sequence is MERHGVAAPPVELKDQEPPAIVESGEHRQSENHEETPGSVAPSASCQLPGPF. Residues 24–36 show a composition bias toward basic and acidic residues; sequence SGEHRQSENHEET. Coiled-coil stretches lie at residues 52–83 and 118–146; these read FSSLDSSIETLKKKAQELIENINESRQKDHAL and QERLQEFTQKMAKINHLEMELKQVCQTVE.

This sequence belongs to the SYCE family. In terms of assembly, homodimer. Found in a complex with SYCP1 and SYCE1. Interacts with SYCP1 and SYCE1. Interacts with SYCE3. Interacts with TEX12. Meiotic cells (at protein level). Expressed in the ovary and testis.

The protein localises to the nucleus. It localises to the chromosome. Its function is as follows. Major component of the transverse central element of synaptonemal complexes (SCS), formed between homologous chromosomes during meiotic prophase. Requires SYCP1 in order to be incorporated into the central element. May have a role in the synaptonemal complex assembly, stabilization and recombination. In Mus musculus (Mouse), this protein is Synaptonemal complex central element protein 2 (Syce2).